The primary structure comprises 226 residues: Leucyl/phenylalanyl-tRNA--protein transferase (226 aa).

This sequence belongs to the L/F-transferase family.

Its subcellular location is the cytoplasm. The catalysed reaction is N-terminal L-lysyl-[protein] + L-leucyl-tRNA(Leu) = N-terminal L-leucyl-L-lysyl-[protein] + tRNA(Leu) + H(+). It carries out the reaction N-terminal L-arginyl-[protein] + L-leucyl-tRNA(Leu) = N-terminal L-leucyl-L-arginyl-[protein] + tRNA(Leu) + H(+). It catalyses the reaction L-phenylalanyl-tRNA(Phe) + an N-terminal L-alpha-aminoacyl-[protein] = an N-terminal L-phenylalanyl-L-alpha-aminoacyl-[protein] + tRNA(Phe). Functionally, functions in the N-end rule pathway of protein degradation where it conjugates Leu, Phe and, less efficiently, Met from aminoacyl-tRNAs to the N-termini of proteins containing an N-terminal arginine or lysine. The polypeptide is Leucyl/phenylalanyl-tRNA--protein transferase (Salinibacter ruber (strain DSM 13855 / M31)).